The following is a 1027-amino-acid chain: Translation initiation factor IF-2 (1027 aa).

Residues 31 to 433 (YVKSASSTVE…GGVRLPRGNG (403 aa)) are disordered. The segment covering 57–68 (KKGGGDSNGRAG) has biased composition (gly residues). The span at 110–122 (GPKPGPKPGPKAP) shows a compositional bias: pro residues. The span at 123-145 (APETKPFEEAPAPAAKADAPAQP) shows a compositional bias: low complexity. Over residues 148–171 (EQPRSEQPRSEQPRSEQPRSERSG) the composition is skewed to basic and acidic residues. Composition is skewed to pro residues over residues 174-188 (PGGP…PKPG) and 201-212 (PPKPQSPKPGPR). Residues 237 to 268 (PGGGQRQGGQGPGRGGPQGGRPDRQGGGGQGA) show a composition bias toward gly residues. Residues 293–302 (GMMPPRPNPG) are compositionally biased toward pro residues. The segment covering 311–397 (SGGGPGGGRG…GAAGAFGRPG (87 aa)) has biased composition (gly residues). The segment covering 401-410 (RRGRKSKRQK) has biased composition (basic residues). Residues 523 to 695 (SRPPVVTVMG…ILLTADATLD (173 aa)) enclose the tr-type G domain. The segment at 532–539 (GHVDHGKT) is G1. A GTP-binding site is contributed by 532 to 539 (GHVDHGKT). A G2 region spans residues 557–561 (GITQH). The interval 582 to 585 (DTPG) is G3. GTP contacts are provided by residues 582-586 (DTPGH) and 636-639 (NKID). The segment at 636 to 639 (NKID) is G4. A G5 region spans residues 672–674 (SAR).

It belongs to the TRAFAC class translation factor GTPase superfamily. Classic translation factor GTPase family. IF-2 subfamily.

The protein resides in the cytoplasm. In terms of biological role, one of the essential components for the initiation of protein synthesis. Protects formylmethionyl-tRNA from spontaneous hydrolysis and promotes its binding to the 30S ribosomal subunits. Also involved in the hydrolysis of GTP during the formation of the 70S ribosomal complex. The protein is Translation initiation factor IF-2 of Saccharopolyspora erythraea (strain ATCC 11635 / DSM 40517 / JCM 4748 / NBRC 13426 / NCIMB 8594 / NRRL 2338).